The chain runs to 504 residues: Maturase K (504 aa).

Belongs to the intron maturase 2 family. MatK subfamily.

The protein resides in the plastid. The protein localises to the chloroplast. Usually encoded in the trnK tRNA gene intron. Probably assists in splicing its own and other chloroplast group II introns. The sequence is that of Maturase K from Vigna unguiculata (Cowpea).